The chain runs to 499 residues: Probable UTP--glucose-1-phosphate uridylyltransferase (499 aa).

Residues 108-111, Lys-122, Gln-185, and Gly-214 each bind UTP; that span reads LNGG. A substrate-binding site is contributed by 110–111; that stretch reads GG. Substrate is bound by residues His-215 and 243 to 245; that span reads NID. UTP is bound by residues Asp-245 and Lys-387.

It belongs to the UDPGP type 1 family.

Its subcellular location is the cytoplasm. It localises to the nucleus. It carries out the reaction alpha-D-glucose 1-phosphate + UTP + H(+) = UDP-alpha-D-glucose + diphosphate. Plays a central role as a glucosyl donor in cellular metabolic pathways. This Schizosaccharomyces pombe (strain 972 / ATCC 24843) (Fission yeast) protein is Probable UTP--glucose-1-phosphate uridylyltransferase.